The following is a 956-amino-acid chain: DNA repair endonuclease UVH1 (956 aa).

A Nuclear localization signal motif is present at residues 256-272 (RRQLDPIWHTLGKRTKQ). 3 disordered regions span residues 343 to 363 (HVKNKSGKKRNSKGETDSVEA), 516 to 593 (TTDM…RPSG), and 697 to 718 (SSTEFPASSTQNSLTRKAGGRK). The segment covering 697 to 711 (SSTEFPASSTQNSLT) has biased composition (polar residues). The region spanning 725-805 (QVIVDMREFM…IPVLLIEFSQ (81 aa)) is the ERCC4 domain.

It belongs to the XPF family. Heterodimer with ERCC1/RAD10. In terms of tissue distribution, isoform 1 and isoform 2 are widely expressed, predominantly in flowers, meristems and stems. Isoform 3 is detected at low levels.

It is found in the nucleus. Its function is as follows. Seems to be involved in nucleotide excision repair (NER) of damaged DNA (dark repair mechanism). Involved in repair of UV light, and probably oxidative damage. The UVH1/RAD1-ERCC1/RAD10 complex may act as an endonuclease making DNA incision 5' to the lesion site. In vitro, is implicated in double strand breaks (DSBs) repair and is required for homologous recombination in the presence of non-homologous overhangs. May mediate the induction of a DNA-damage sensitive cell-cycle checkpoint during the G2 phase. This is DNA repair endonuclease UVH1 (UVH1) from Arabidopsis thaliana (Mouse-ear cress).